The primary structure comprises 225 residues: Peptidyl-tRNA hydrolase (225 aa).

TRNA is bound at residue tyrosine 14. The active-site Proton acceptor is the histidine 19. The tRNA site is built by phenylalanine 64, asparagine 66, and asparagine 112. The segment at 184 to 225 is disordered; it reads ALRMQPPKPEKPKPAAKAPEAQAPEAAPDERSALQKLADRFR. The segment covering 198–209 has biased composition (low complexity); it reads AAKAPEAQAPEA. Residues 211 to 225 show a composition bias toward basic and acidic residues; that stretch reads PDERSALQKLADRFR.

The protein belongs to the PTH family. In terms of assembly, monomer.

It is found in the cytoplasm. It carries out the reaction an N-acyl-L-alpha-aminoacyl-tRNA + H2O = an N-acyl-L-amino acid + a tRNA + H(+). Its function is as follows. Hydrolyzes ribosome-free peptidyl-tRNAs (with 1 or more amino acids incorporated), which drop off the ribosome during protein synthesis, or as a result of ribosome stalling. Functionally, catalyzes the release of premature peptidyl moieties from peptidyl-tRNA molecules trapped in stalled 50S ribosomal subunits, and thus maintains levels of free tRNAs and 50S ribosomes. The protein is Peptidyl-tRNA hydrolase of Cereibacter sphaeroides (strain ATCC 17023 / DSM 158 / JCM 6121 / CCUG 31486 / LMG 2827 / NBRC 12203 / NCIMB 8253 / ATH 2.4.1.) (Rhodobacter sphaeroides).